The following is a 93-amino-acid chain: Small ribosomal subunit protein uS19 (93 aa).

This sequence belongs to the universal ribosomal protein uS19 family.

In terms of biological role, protein S19 forms a complex with S13 that binds strongly to the 16S ribosomal RNA. In Lacticaseibacillus paracasei (strain ATCC 334 / BCRC 17002 / CCUG 31169 / CIP 107868 / KCTC 3260 / NRRL B-441) (Lactobacillus paracasei), this protein is Small ribosomal subunit protein uS19.